We begin with the raw amino-acid sequence, 420 residues long: MTNALLEDLKWRGLIYQQTDESGIENILNKEQVTLYCGADPTADSLHIGHLLPFLTLRRFQEHGHRPLVLIGGGTGMIGDPSGKSEERTLQTEAQVETNVQGINKQMHKIFEFDTEKGAKLVNNKDWLGQISLIDFLRDYGKHVGVNYMLGKDSIQTRLEHGISYTEFTYTILQAIDFGHLNRTYNCKVQVGGSDQWGNITSGIELMRRMYGQTEAYGLTIPLVVKSDGKKFGKTEGGAVWLDAAKTSPYEFYQFWINTTDDDVIKFLKYFTFLEQEEIEALEKSLNEAPHLREAQKALAENVTRFIHGQDALDDAIRISQALFAGDLQSLSASELKEGFKDVPQVELSSETRNIVEVIVETGISSSKRQAREDVNNGAIYINGIRQQDVNYELTSEDKIENEFTIIRRGKKKYFMVNYK.

Position 36 (Y36) interacts with L-tyrosine. The 'HIGH' region motif lies at 41-50 (PTADSLHIGH). L-tyrosine-binding residues include Y170 and Q174. Positions 231 to 235 (KFGKT) match the 'KMSKS' region motif. K234 contacts ATP. Positions 353–420 (RNIVEVIVET…KKKYFMVNYK (68 aa)) constitute an S4 RNA-binding domain.

The protein belongs to the class-I aminoacyl-tRNA synthetase family. TyrS type 1 subfamily. Homodimer.

Its subcellular location is the cytoplasm. It carries out the reaction tRNA(Tyr) + L-tyrosine + ATP = L-tyrosyl-tRNA(Tyr) + AMP + diphosphate + H(+). Catalyzes the attachment of tyrosine to tRNA(Tyr) in a two-step reaction: tyrosine is first activated by ATP to form Tyr-AMP and then transferred to the acceptor end of tRNA(Tyr). The chain is Tyrosine--tRNA ligase from Staphylococcus saprophyticus subsp. saprophyticus (strain ATCC 15305 / DSM 20229 / NCIMB 8711 / NCTC 7292 / S-41).